Consider the following 963-residue polypeptide: MDDDQQFCLRWNNHQSTLISVFDTLLENETLVDCTLAAEGKFLKAHKVVLSACSPYFATLLQEQYDKHPIFILKDVKYQELRAMMDYMYRGEVNISQDQLAALLKAAESLQIKGLSDNRTGGGVAPKPESSGHHRGGKLSGAYTLEQTKRARLATGGAMDTSGDVSGSREGSSSPSRRRRKVRRRSMENDAHDNSNSSVLQAAASNQSILQQTGAGLAVSALVTTQLSSGPAAGTSSQASSTQQQQPLTSTNVTKKTESAKLTSSTAAPASGASASAAVQQAHLHQQQAQTTSDAINTENVQAQSQGGAQGVQGDDEDIDEGSAVGGPNSATGPNPASASASAVHAGVVVKQLASVVDKSSSNHKHKIKDNSVSSVGSEMVIEPKAEYDDDAHDENVEDLTLDEEDMTMEELDQTAGTSQGGEGSSQTYATWQHDRSQDELGLMAQDAQQRDPQDEAGQNEGGESRIRVRNWLMLADKSIIGKSSDEPSDKLTQSKKSLISDAKTTNKTSTPIRPKVSTTTTSTSTAAAAAAAATIAAKQAAAAIASSNINNNNSSLTQTVTQTVTRIGSIGRTTIACITPANNGNKSSSSNCNVDAASAAALAAAGVELDSIDDTMTEVIVKIENPESMPLNDDEDDAVCNEAIEDENTFDYDLKLGSPLSWTYDAVKIENEEFEDSYLMDNDDDDDDLLTTAAATQKHAKQSNEKQMAGSMVAGAGSGGAVKKIVLSAQQQQQLLEQQQHLQHLQLQPTSQSLQIKLPAIPATITTISAPKQMMSGAGTSGSLTPNNNCTLMSNKLGLPVKGQNLDLHWSHSDDNRYRVLVQNKRTRKESLEHSADMIYNADIEKPWVCRNCNRTYKWKNSLKCHLKNECGLPPRYFCSKMCGYATNVHSNLKRHLNTKCRDREKDADDEKKPGSASGNMPVVVGVGNGTAVPVSSSNNNNNGGGSSTSSTYTLVFQNDSA.

One can recognise a BTB domain in the interval 32-97 (VDCTLAAEGK…MYRGEVNISQ (66 aa)). Disordered stretches follow at residues 115-200 (LSDN…SSVL), 228-340 (SSGP…ASAS), 447-469 (DAQQRDPQDEAGQNEGGESRIRV), and 482-520 (GKSSDEPSDKLTQSKKSLISDAKTTNKTSTPIRPKVSTT). Composition is skewed to low complexity over residues 162–175 (SGDVSGSREGSSSP), 228–251 (SSGPAAGTSSQASSTQQQQPLTST), 263–293 (TSSTAAPASGASASAAVQQAHLHQQQAQTTS), and 329–340 (NSATGPNPASAS). Residues 491-512 (KLTQSKKSLISDAKTTNKTSTP) are compositionally biased toward polar residues. A C2H2-type 1; degenerate zinc finger spans residues 849–871 (WVCRNCNRTYKWKNSLKCHLKNE). The segment at 878-901 (YFCSKMCGYATNVHSNLKRHLNTK) adopts a C2H2-type 2; degenerate zinc-finger fold. The interval 900–963 (TKCRDREKDA…YTLVFQNDSA (64 aa)) is disordered. Residues 901-915 (KCRDREKDADDEKKP) are compositionally biased toward basic and acidic residues. The segment covering 937 to 953 (SSSNNNNNGGGSSTSST) has biased composition (low complexity). A compositionally biased stretch (polar residues) spans 954–963 (YTLVFQNDSA).

By stage 11, isoform Q, isoform P and isoform Z are expressed throughout the mesoderm. From stage 15, expression of isoform P expands to all tissues, whereas expression of isoform Z and isoform Q becomes restricted during later stages; starting from stage 14 to 16, isoform Z is expressed in muscle, and isoform Q and isoform Z are expressed in the CNS. For some isoforms, expression is also seen in specific types of cells in the embryo; isoform Z is expressed in the ventral furrow at stage 5, and isoform Q is expressed around the tracheal pits at stage 11. Isoform Z also shows transient enrichment in a dorsal cell layer in the CNS at stages 13 and 14.

Its subcellular location is the nucleus. Its function is as follows. Putative transcription factor required for axon growth and guidance in the central and peripheral nervous systems. Repels CNS axons away from the midline by promoting the expression of the midline repellent sli and its receptor robo. This Drosophila melanogaster (Fruit fly) protein is Longitudinals lacking protein, isoforms J/P/Q/S/Z.